A 489-amino-acid chain; its full sequence is Beta-galactosidase (489 aa).

K116 is subject to N6-methyllysine; partial. At K135 the chain carries N6-methyllysine. The active-site Proton donor is E206. N6-methyllysine; partial is present on residues K273 and K311. K332 bears the N6-methyllysine mark. The active-site Nucleophile is E387.

Homotetramer.

The enzyme catalyses Hydrolysis of terminal non-reducing beta-D-galactose residues in beta-D-galactosides.. The chain is Beta-galactosidase (lacS) from Saccharolobus solfataricus (strain ATCC 35092 / DSM 1617 / JCM 11322 / P2) (Sulfolobus solfataricus).